The sequence spans 360 residues: GTPase Obg (360 aa).

Residues 1–156 (MFVDSVEIII…KCVRLELKLI (156 aa)) form the Obg domain. An OBG-type G domain is found at 157-360 (ADIGLVGFPN…LKFVLLEALP (204 aa)). Residues 163–170 (GFPNAGKS), 188–192 (FTTLV), 210–213 (DIPG), 279–282 (NKCD), and 341–343 (SAL) contribute to the GTP site. Mg(2+)-binding residues include serine 170 and threonine 190.

The protein belongs to the TRAFAC class OBG-HflX-like GTPase superfamily. OBG GTPase family. As to quaternary structure, monomer. Mg(2+) serves as cofactor.

It localises to the cytoplasm. Its function is as follows. An essential GTPase which binds GTP, GDP and possibly (p)ppGpp with moderate affinity, with high nucleotide exchange rates and a fairly low GTP hydrolysis rate. Plays a role in control of the cell cycle, stress response, ribosome biogenesis and in those bacteria that undergo differentiation, in morphogenesis control. The polypeptide is GTPase Obg (Helicobacter pylori (strain Shi470)).